Consider the following 184-residue polypeptide: Photosystem I assembly protein Ycf4 (184 aa).

2 helical membrane passes run 21–43 (NFCW…FSSY) and 58–80 (LFIP…SFYL).

It belongs to the Ycf4 family.

It localises to the plastid. It is found in the chloroplast thylakoid membrane. In terms of biological role, seems to be required for the assembly of the photosystem I complex. The chain is Photosystem I assembly protein Ycf4 from Marchantia polymorpha (Common liverwort).